We begin with the raw amino-acid sequence, 402 residues long: Protochlorophyllide reductase B, chloroplastic (402 aa).

Belongs to the short-chain dehydrogenases/reductases (SDR) family. POR subfamily.

It is found in the plastid. The protein resides in the chloroplast. The enzyme catalyses chlorophyllide a + NADP(+) = protochlorophyllide a + NADPH + H(+). The protein operates within porphyrin-containing compound metabolism; chlorophyll biosynthesis. In terms of biological role, phototransformation of protochlorophyllide (Pchlide) to chlorophyllide (Chlide). This is Protochlorophyllide reductase B, chloroplastic (PORB) from Oryza sativa subsp. japonica (Rice).